A 20-amino-acid polypeptide reads, in one-letter code: Pregnancy-associated glycoprotein 61C (20 aa).

This sequence belongs to the peptidase A1 family. N-glycosylated. In terms of tissue distribution, expressed in chorionic epithelium (trophectoderm).

The protein localises to the secreted. The protein resides in the extracellular space. This is Pregnancy-associated glycoprotein 61C from Bubalus bubalis (Domestic water buffalo).